The chain runs to 328 residues: Sulfate adenylyltransferase subunit 2 (328 aa).

The disordered stretch occupies residues 309 to 328; it reads RAIDKDQTASMEKKKQEGYF.

This sequence belongs to the PAPS reductase family. CysD subfamily. Heterodimer composed of CysD, the smaller subunit, and CysN.

The enzyme catalyses sulfate + ATP + H(+) = adenosine 5'-phosphosulfate + diphosphate. It participates in sulfur metabolism; hydrogen sulfide biosynthesis; sulfite from sulfate: step 1/3. With CysN forms the ATP sulfurylase (ATPS) that catalyzes the adenylation of sulfate producing adenosine 5'-phosphosulfate (APS) and diphosphate, the first enzymatic step in sulfur assimilation pathway. APS synthesis involves the formation of a high-energy phosphoric-sulfuric acid anhydride bond driven by GTP hydrolysis by CysN coupled to ATP hydrolysis by CysD. The sequence is that of Sulfate adenylyltransferase subunit 2 from Hyphomonas neptunium (strain ATCC 15444).